Reading from the N-terminus, the 75-residue chain is Veswaprin-c (75 aa).

A signal peptide spans 1–24 (MSSGGLLLLLGLLTLWAELTPVSS). The WAP domain maps to 27–72 (RPKKPGLCPPRPQKPPCVRECKNDWRCPGERKCCRYGCIYECRDPI). 4 cysteine pairs are disulfide-bonded: Cys34–Cys60, Cys43–Cys64, Cys47–Cys59, and Cys53–Cys68.

Belongs to the venom waprin family. Expressed by the venom gland.

It is found in the secreted. In terms of biological role, damages membranes of susceptible bacteria. Has no hemolytic activity. Not toxic to mice. Does not inhibit the proteinases elastase and cathepsin G. In Demansia vestigiata (Lesser black whip snake), this protein is Veswaprin-c.